The sequence spans 157 residues: Large ribosomal subunit protein uL3 (157 aa).

The disordered stretch occupies residues 57–98; that stretch reads GKGFAGSIKRHNQSRGPESHGSRYHRRPGSMGPIKGKLKGKK.

The protein belongs to the universal ribosomal protein uL3 family. As to quaternary structure, part of the 50S ribosomal subunit. Forms a cluster with proteins L14 and L19.

Functionally, one of the primary rRNA binding proteins, it binds directly near the 3'-end of the 23S rRNA, where it nucleates assembly of the 50S subunit. In Onion yellows phytoplasma (strain OY-M), this protein is Large ribosomal subunit protein uL3 (rplC).